Here is a 503-residue protein sequence, read N- to C-terminus: Probable cytosol aminopeptidase (503 aa).

2 residues coordinate Mn(2+): Lys270 and Asp275. The active site involves Lys282. Asp293, Asp352, and Glu354 together coordinate Mn(2+). Arg356 is an active-site residue.

This sequence belongs to the peptidase M17 family. The cofactor is Mn(2+).

The protein localises to the cytoplasm. It carries out the reaction Release of an N-terminal amino acid, Xaa-|-Yaa-, in which Xaa is preferably Leu, but may be other amino acids including Pro although not Arg or Lys, and Yaa may be Pro. Amino acid amides and methyl esters are also readily hydrolyzed, but rates on arylamides are exceedingly low.. The enzyme catalyses Release of an N-terminal amino acid, preferentially leucine, but not glutamic or aspartic acids.. Its function is as follows. Presumably involved in the processing and regular turnover of intracellular proteins. Catalyzes the removal of unsubstituted N-terminal amino acids from various peptides. This Serratia proteamaculans (strain 568) protein is Probable cytosol aminopeptidase.